The sequence spans 414 residues: Putative polyketide beta-ketoacyl synthase 2 (414 aa).

In terms of domain architecture, Ketosynthase family 3 (KS3) spans 4–407; it reads PRRAVVTGLG…GNNSALVLRR (404 aa).

This sequence belongs to the thiolase-like superfamily. Beta-ketoacyl-ACP synthases family.

Involved in developmentally regulated synthesis of a compound biosynthetically related to polyketide antibiotics which is essential for spore color in Streptomyces halstedii. This chain is Putative polyketide beta-ketoacyl synthase 2 (sch2), found in Streptomyces halstedii.